The sequence spans 300 residues: tRNA-cytidine(32) 2-sulfurtransferase (300 aa).

Residues 57–62 (SGGKDS) carry the PP-loop motif motif. [4Fe-4S] cluster contacts are provided by cysteine 132, cysteine 135, and cysteine 223.

Belongs to the TtcA family. Homodimer. Mg(2+) is required as a cofactor. It depends on [4Fe-4S] cluster as a cofactor.

It localises to the cytoplasm. The catalysed reaction is cytidine(32) in tRNA + S-sulfanyl-L-cysteinyl-[cysteine desulfurase] + AH2 + ATP = 2-thiocytidine(32) in tRNA + L-cysteinyl-[cysteine desulfurase] + A + AMP + diphosphate + H(+). It functions in the pathway tRNA modification. Its function is as follows. Catalyzes the ATP-dependent 2-thiolation of cytidine in position 32 of tRNA, to form 2-thiocytidine (s(2)C32). The sulfur atoms are provided by the cysteine/cysteine desulfurase (IscS) system. The chain is tRNA-cytidine(32) 2-sulfurtransferase from Xanthomonas campestris pv. campestris (strain 8004).